Reading from the N-terminus, the 324-residue chain is NADH-ubiquinone oxidoreductase chain 1 (324 aa).

The next 9 helical transmembrane spans lie at 9–29, 43–63, 77–97, 106–126, 146–166, 177–197, 228–248, 259–279, and 299–319; these read LINPLAYIIPILLATAFLTLI, PNIVGPYGLLQPIADGLKLFI, FLATPTVALALALLMWMPLPL, LGLLFILAISSLTVYTILGSG, ISYEVSLGLILLSMIIFAGGF, TIWLLIPGWPLAFMWYISTLA, LFFLAEYTNILLMNTLSVILF, QISSLSLMMKASMLTVLFLWI, and FLPLTLAIILWHMALPLATTS.

Belongs to the complex I subunit 1 family.

The protein resides in the mitochondrion inner membrane. The catalysed reaction is a ubiquinone + NADH + 5 H(+)(in) = a ubiquinol + NAD(+) + 4 H(+)(out). In terms of biological role, core subunit of the mitochondrial membrane respiratory chain NADH dehydrogenase (Complex I) that is believed to belong to the minimal assembly required for catalysis. Complex I functions in the transfer of electrons from NADH to the respiratory chain. The immediate electron acceptor for the enzyme is believed to be ubiquinone. This Scyliorhinus canicula (Small-spotted catshark) protein is NADH-ubiquinone oxidoreductase chain 1 (MT-ND1).